Here is a 177-residue protein sequence, read N- to C-terminus: NAD(P)H-quinone oxidoreductase subunit 6, chloroplastic (177 aa).

5 consecutive transmembrane segments (helical) span residues 10-30 (ILLVSLGSGLIVGGLGVVLLT), 32-52 (PIYSAFSLGLVLVCISLFYIP), 61-81 (AQLLIYVGAINVLILFAVMFM), 92-112 (FWTVGDGFTSLVCTSIFFSLI), and 152-172 (FYLPFELISIILLVSLVGAIA).

The protein belongs to the complex I subunit 6 family. NDH is composed of at least 16 different subunits, 5 of which are encoded in the nucleus.

The protein localises to the plastid. Its subcellular location is the chloroplast thylakoid membrane. It carries out the reaction a plastoquinone + NADH + (n+1) H(+)(in) = a plastoquinol + NAD(+) + n H(+)(out). The enzyme catalyses a plastoquinone + NADPH + (n+1) H(+)(in) = a plastoquinol + NADP(+) + n H(+)(out). Functionally, NDH shuttles electrons from NAD(P)H:plastoquinone, via FMN and iron-sulfur (Fe-S) centers, to quinones in the photosynthetic chain and possibly in a chloroplast respiratory chain. The immediate electron acceptor for the enzyme in this species is believed to be plastoquinone. Couples the redox reaction to proton translocation, and thus conserves the redox energy in a proton gradient. The protein is NAD(P)H-quinone oxidoreductase subunit 6, chloroplastic (ndhG) of Nymphaea alba (White water-lily).